A 119-amino-acid chain; its full sequence is Polyhedrin (119 aa).

Belongs to the polyhedrin family.

In terms of biological role, major component of the virus occlusion bodies, which are large proteinaceous structures (polyhedra), that protect the virus from the outside environment for extended periods until they are ingested by insect larvae. The protein is Polyhedrin (PH) of Antheraea pernyi nuclear polyhedrosis virus (ApNPV).